The sequence spans 432 residues: Trigger factor (432 aa).

Residues 161–246 enclose the PPIase FKBP-type domain; the sequence is EDRVTIDFTG…LKKVEERELP (86 aa).

It belongs to the FKBP-type PPIase family. Tig subfamily. In terms of assembly, homodimer and monomer. In vivo most of the ribosomes are in complex with monomeric TF. Uncomplexed TF, however, is in a monomer-dimer equilibrium with approximately two thirds of TF existing in a dimeric state.

Its subcellular location is the cytoplasm. The catalysed reaction is [protein]-peptidylproline (omega=180) = [protein]-peptidylproline (omega=0). Involved in protein export. Acts as a chaperone by maintaining the newly synthesized protein in an open conformation. Functions as a peptidyl-prolyl cis-trans isomerase. This Escherichia coli O127:H6 (strain E2348/69 / EPEC) protein is Trigger factor.